Consider the following 100-residue polypeptide: Large ribosomal subunit protein uL23 (100 aa).

Belongs to the universal ribosomal protein uL23 family. Part of the 50S ribosomal subunit. Contacts protein L29, and trigger factor when it is bound to the ribosome.

Its function is as follows. One of the early assembly proteins it binds 23S rRNA. One of the proteins that surrounds the polypeptide exit tunnel on the outside of the ribosome. Forms the main docking site for trigger factor binding to the ribosome. This Vibrio vulnificus (strain CMCP6) protein is Large ribosomal subunit protein uL23.